Here is a 198-residue protein sequence, read N- to C-terminus: Nucleoid occlusion factor SlmA (198 aa).

Residues 9–70 (RNRREEILQA…SLIEFIEDSL (62 aa)) form the HTH tetR-type domain. Residues 33–52 (TTAKLAANVGVSEAALYRHF) constitute a DNA-binding region (H-T-H motif). The stretch at 119-144 (DRLQGRINQLFERIEMQLRQVLREKK) forms a coiled coil.

This sequence belongs to the nucleoid occlusion factor SlmA family. Homodimer. Interacts with FtsZ.

Its subcellular location is the cytoplasm. The protein localises to the nucleoid. Functionally, required for nucleoid occlusion (NO) phenomenon, which prevents Z-ring formation and cell division over the nucleoid. Acts as a DNA-associated cell division inhibitor that binds simultaneously chromosomal DNA and FtsZ, and disrupts the assembly of FtsZ polymers. SlmA-DNA-binding sequences (SBS) are dispersed on non-Ter regions of the chromosome, preventing FtsZ polymerization at these regions. The protein is Nucleoid occlusion factor SlmA of Yersinia pseudotuberculosis serotype I (strain IP32953).